The following is a 188-amino-acid chain: uncharacterized protein (188 aa).

Residues 133 to 153 (PKGRPTMKLQYPKMPPKPKTR) are disordered.

This sequence belongs to the IS150/IS1296 orfA family.

This is an uncharacterized protein from Haemophilus influenzae (strain ATCC 51907 / DSM 11121 / KW20 / Rd).